A 103-amino-acid polypeptide reads, in one-letter code: 11.2 kDa protein (103 aa).

This Pseudomonas phage Pf1 (Bacteriophage Pf1) protein is 11.2 kDa protein.